Reading from the N-terminus, the 256-residue chain is Triosephosphate isomerase (256 aa).

Substrate is bound at residue 9–11 (NWK). Histidine 97 acts as the Electrophile in catalysis. Residue glutamate 169 is the Proton acceptor of the active site. Residues glycine 175, serine 214, and 235–236 (GG) each bind substrate.

The protein belongs to the triosephosphate isomerase family. As to quaternary structure, homodimer.

It is found in the cytoplasm. The catalysed reaction is D-glyceraldehyde 3-phosphate = dihydroxyacetone phosphate. It functions in the pathway carbohydrate biosynthesis; gluconeogenesis. Its pathway is carbohydrate degradation; glycolysis; D-glyceraldehyde 3-phosphate from glycerone phosphate: step 1/1. Involved in the gluconeogenesis. Catalyzes stereospecifically the conversion of dihydroxyacetone phosphate (DHAP) to D-glyceraldehyde-3-phosphate (G3P). This is Triosephosphate isomerase from Vibrio parahaemolyticus serotype O3:K6 (strain RIMD 2210633).